A 187-amino-acid polypeptide reads, in one-letter code: GTP cyclohydrolase 1 (187 aa).

Zn(2+) is bound by residues Cys-76, His-79, and Cys-148.

The protein belongs to the GTP cyclohydrolase I family. Homomer.

The enzyme catalyses GTP + H2O = 7,8-dihydroneopterin 3'-triphosphate + formate + H(+). Its pathway is cofactor biosynthesis; 7,8-dihydroneopterin triphosphate biosynthesis; 7,8-dihydroneopterin triphosphate from GTP: step 1/1. The protein is GTP cyclohydrolase 1 of Streptococcus gordonii (strain Challis / ATCC 35105 / BCRC 15272 / CH1 / DL1 / V288).